The following is a 210-amino-acid chain: Na(+)-translocating NADH-quinone reductase subunit D (210 aa).

5 consecutive transmembrane segments (helical) span residues 42 to 62 (FVMTLAVTFVTALSNFFVSLI), 72 to 92 (IIVQMAIIASLVIVVDQILKA), 103 to 123 (VFVGLIITNCIVMGRAEAFAM), 131 to 151 (LIDGIGNGLGYGFVLITVGFF), and 178 to 198 (NGLMLLAPSAFFLIGFMIWAI).

Belongs to the NqrDE/RnfAE family. As to quaternary structure, composed of six subunits; NqrA, NqrB, NqrC, NqrD, NqrE and NqrF.

It localises to the cell inner membrane. The enzyme catalyses a ubiquinone + n Na(+)(in) + NADH + H(+) = a ubiquinol + n Na(+)(out) + NAD(+). In terms of biological role, NQR complex catalyzes the reduction of ubiquinone-1 to ubiquinol by two successive reactions, coupled with the transport of Na(+) ions from the cytoplasm to the periplasm. NqrA to NqrE are probably involved in the second step, the conversion of ubisemiquinone to ubiquinol. The chain is Na(+)-translocating NADH-quinone reductase subunit D from Vibrio vulnificus (strain CMCP6).